A 182-amino-acid chain; its full sequence is Large ribosomal subunit protein eL15 (182 aa).

The protein belongs to the eukaryotic ribosomal protein eL15 family.

The protein is Large ribosomal subunit protein eL15 (rpl15e) of Methanothermobacter thermautotrophicus (strain ATCC 29096 / DSM 1053 / JCM 10044 / NBRC 100330 / Delta H) (Methanobacterium thermoautotrophicum).